We begin with the raw amino-acid sequence, 175 residues long: Crossover junction endodeoxyribonuclease RuvC (175 aa).

Catalysis depends on residues Asp-8, Glu-68, and Asp-140. Asp-8, Glu-68, and Asp-140 together coordinate Mg(2+).

Belongs to the RuvC family. In terms of assembly, homodimer which binds Holliday junction (HJ) DNA. The HJ becomes 2-fold symmetrical on binding to RuvC with unstacked arms; it has a different conformation from HJ DNA in complex with RuvA. In the full resolvosome a probable DNA-RuvA(4)-RuvB(12)-RuvC(2) complex forms which resolves the HJ. The cofactor is Mg(2+).

It is found in the cytoplasm. The catalysed reaction is Endonucleolytic cleavage at a junction such as a reciprocal single-stranded crossover between two homologous DNA duplexes (Holliday junction).. Functionally, the RuvA-RuvB-RuvC complex processes Holliday junction (HJ) DNA during genetic recombination and DNA repair. Endonuclease that resolves HJ intermediates. Cleaves cruciform DNA by making single-stranded nicks across the HJ at symmetrical positions within the homologous arms, yielding a 5'-phosphate and a 3'-hydroxyl group; requires a central core of homology in the junction. The consensus cleavage sequence is 5'-(A/T)TT(C/G)-3'. Cleavage occurs on the 3'-side of the TT dinucleotide at the point of strand exchange. HJ branch migration catalyzed by RuvA-RuvB allows RuvC to scan DNA until it finds its consensus sequence, where it cleaves and resolves the cruciform DNA. This is Crossover junction endodeoxyribonuclease RuvC from Pseudomonas fluorescens (strain Pf0-1).